A 261-amino-acid polypeptide reads, in one-letter code: Cytochrome c oxidase subunit 3 (261 aa).

Residues 1–15 (MTHQTHAYHMVNPSP) lie on the Mitochondrial matrix side of the membrane. The chain crosses the membrane as a helical span at residues 16–34 (WPLTGALSALLMTSGLAMW). The Mitochondrial intermembrane portion of the chain corresponds to 35-40 (FHFNST). A helical membrane pass occupies residues 41–66 (ILLMIGLTTNTLTMYQWWRDVIREST). Topologically, residues 67–72 (FQGHHT) are mitochondrial matrix. The helical transmembrane segment at 73–105 (PTVQKGLRYGMILFIISEVLFFTGFFWAFYHSS) threads the bilayer. The Mitochondrial intermembrane portion of the chain corresponds to 106 to 128 (LAPTPELGGCWPPTGIHPLNPLE). Residues 129–152 (VPLLNTSVLLASGVSITWAHHSLM) traverse the membrane as a helical segment. Residues 153–155 (EGN) lie on the Mitochondrial matrix side of the membrane. The chain crosses the membrane as a helical span at residues 156 to 183 (RYPMLQALFITIALGVYFTLLQASEYYE). At 184–190 (APFTISD) the chain is on the mitochondrial intermembrane side. The chain crosses the membrane as a helical span at residues 191 to 223 (GIYGSTFFVATGFHGLHVIIGSTFLIVCFFRQL). The Mitochondrial matrix segment spans residues 224–232 (KFHFTSNHH). The chain crosses the membrane as a helical span at residues 233–256 (FGFEAAAWYWHFVDVVWLFLYVSI). Residues 257–261 (YWWGS) are Mitochondrial intermembrane-facing.

It belongs to the cytochrome c oxidase subunit 3 family. In terms of assembly, component of the cytochrome c oxidase (complex IV, CIV), a multisubunit enzyme composed of 14 subunits. The complex is composed of a catalytic core of 3 subunits MT-CO1, MT-CO2 and MT-CO3, encoded in the mitochondrial DNA, and 11 supernumerary subunits COX4I, COX5A, COX5B, COX6A, COX6B, COX6C, COX7A, COX7B, COX7C, COX8 and NDUFA4, which are encoded in the nuclear genome. The complex exists as a monomer or a dimer and forms supercomplexes (SCs) in the inner mitochondrial membrane with NADH-ubiquinone oxidoreductase (complex I, CI) and ubiquinol-cytochrome c oxidoreductase (cytochrome b-c1 complex, complex III, CIII), resulting in different assemblies (supercomplex SCI(1)III(2)IV(1) and megacomplex MCI(2)III(2)IV(2)).

It localises to the mitochondrion inner membrane. It catalyses the reaction 4 Fe(II)-[cytochrome c] + O2 + 8 H(+)(in) = 4 Fe(III)-[cytochrome c] + 2 H2O + 4 H(+)(out). Functionally, component of the cytochrome c oxidase, the last enzyme in the mitochondrial electron transport chain which drives oxidative phosphorylation. The respiratory chain contains 3 multisubunit complexes succinate dehydrogenase (complex II, CII), ubiquinol-cytochrome c oxidoreductase (cytochrome b-c1 complex, complex III, CIII) and cytochrome c oxidase (complex IV, CIV), that cooperate to transfer electrons derived from NADH and succinate to molecular oxygen, creating an electrochemical gradient over the inner membrane that drives transmembrane transport and the ATP synthase. Cytochrome c oxidase is the component of the respiratory chain that catalyzes the reduction of oxygen to water. Electrons originating from reduced cytochrome c in the intermembrane space (IMS) are transferred via the dinuclear copper A center (CU(A)) of subunit 2 and heme A of subunit 1 to the active site in subunit 1, a binuclear center (BNC) formed by heme A3 and copper B (CU(B)). The BNC reduces molecular oxygen to 2 water molecules using 4 electrons from cytochrome c in the IMS and 4 protons from the mitochondrial matrix. This chain is Cytochrome c oxidase subunit 3 (MT-CO3), found in Raphicerus melanotis (Cape grysbok).